A 479-amino-acid chain; its full sequence is Ribosomal RNA small subunit methyltransferase F (479 aa).

Residues 125–131 (AAAPGSK), E149, D176, and D194 each bind S-adenosyl-L-methionine. Residue C247 is the Nucleophile of the active site.

Belongs to the class I-like SAM-binding methyltransferase superfamily. RsmB/NOP family.

It localises to the cytoplasm. It catalyses the reaction cytidine(1407) in 16S rRNA + S-adenosyl-L-methionine = 5-methylcytidine(1407) in 16S rRNA + S-adenosyl-L-homocysteine + H(+). Specifically methylates the cytosine at position 1407 (m5C1407) of 16S rRNA. The polypeptide is Ribosomal RNA small subunit methyltransferase F (Salmonella typhi).